The chain runs to 168 residues: Putative gustatory receptor clone PTE03 (168 aa).

At 1 to 25 (TTVPKMLINLQKQNKAISYAGCITQ) the chain is on the extracellular side. The cysteines at positions 22 and 104 are disulfide-linked. The helical transmembrane segment at 26-45 (LSFVLLFAGMENFLLAAMAY) threads the bilayer. At 46 to 67 (DRYVAICKPLRYTAIMKAHLCL) the chain is on the cytoplasmic side. A helical transmembrane segment spans residues 68-88 (VMTLLSLCISIVDALLHGLMI). Residues 89 to 121 (LRLSFCTFLEIPHYFCELYQVIKLSCSDTLINN) are Extracellular-facing. Residues 122 to 143 (ILVYTMTSTLGGVPLGGIIFSY) form a helical membrane-spanning segment. At 144–165 (FKIISSILRMPSSGSRHRAFST) the chain is on the cytoplasmic side. A helical membrane pass occupies residues 166-168 (CGS).

This sequence belongs to the G-protein coupled receptor 1 family. Tongue specific.

It localises to the cell membrane. In terms of biological role, possible taste receptor. The sequence is that of Putative gustatory receptor clone PTE03 (Olr1145) from Rattus norvegicus (Rat).